A 385-amino-acid polypeptide reads, in one-letter code: Actin-2 (385 aa).

Belongs to the actin family. ARP1 subfamily.

It localises to the cytoplasm. The protein resides in the cytoskeleton. This chain is Actin-2, found in Pneumocystis carinii.